Reading from the N-terminus, the 271-residue chain is 3-methyl-2-oxobutanoate hydroxymethyltransferase (271 aa).

Residues aspartate 51 and aspartate 90 each coordinate Mg(2+). 3-methyl-2-oxobutanoate is bound by residues 51 to 52, aspartate 90, and lysine 118; that span reads DS. Residue glutamate 120 coordinates Mg(2+). The Proton acceptor role is filled by glutamate 186.

This sequence belongs to the PanB family. In terms of assembly, homodecamer; pentamer of dimers. It depends on Mg(2+) as a cofactor.

It is found in the cytoplasm. It catalyses the reaction 3-methyl-2-oxobutanoate + (6R)-5,10-methylene-5,6,7,8-tetrahydrofolate + H2O = 2-dehydropantoate + (6S)-5,6,7,8-tetrahydrofolate. The protein operates within cofactor biosynthesis; (R)-pantothenate biosynthesis; (R)-pantoate from 3-methyl-2-oxobutanoate: step 1/2. Functionally, catalyzes the reversible reaction in which hydroxymethyl group from 5,10-methylenetetrahydrofolate is transferred onto alpha-ketoisovalerate to form ketopantoate. The polypeptide is 3-methyl-2-oxobutanoate hydroxymethyltransferase (Xanthomonas campestris pv. campestris (strain B100)).